Here is a 1167-residue protein sequence, read N- to C-terminus: Chromosome partition protein Smc (1167 aa).

Residue 32-39 (PNGCGKSN) coordinates ATP. 5 coiled-coil regions span residues 170-274 (ISKY…RIET), 310-390 (QREL…HNRD), 468-500 (GLQE…LETL), 653-870 (ALLR…ERAL), and 982-1011 (EYLD…ETRG).

It belongs to the SMC family. In terms of assembly, homodimer.

It is found in the cytoplasm. In terms of biological role, required for chromosome condensation and partitioning. The chain is Chromosome partition protein Smc from Xanthomonas oryzae pv. oryzae (strain KACC10331 / KXO85).